Consider the following 238-residue polypeptide: Flagellar L-ring protein (238 aa).

The signal sequence occupies residues 1 to 17 (MIRKTLAASCAVLLMAG). Residue cysteine 18 is the site of N-palmitoyl cysteine attachment. Residue cysteine 18 is the site of S-diacylglycerol cysteine attachment.

The protein belongs to the FlgH family. The basal body constitutes a major portion of the flagellar organelle and consists of four rings (L,P,S, and M) mounted on a central rod.

It is found in the cell outer membrane. The protein localises to the bacterial flagellum basal body. Its function is as follows. Assembles around the rod to form the L-ring and probably protects the motor/basal body from shearing forces during rotation. The sequence is that of Flagellar L-ring protein from Nitratidesulfovibrio vulgaris (strain ATCC 29579 / DSM 644 / CCUG 34227 / NCIMB 8303 / VKM B-1760 / Hildenborough) (Desulfovibrio vulgaris).